Reading from the N-terminus, the 593-residue chain is UvrABC system protein C (593 aa).

One can recognise a GIY-YIG domain in the interval 17–94 (MEPGCYLMKD…IKQYQPRYNI (78 aa)). In terms of domain architecture, UVR spans 199–234 (KTILKSLEERMLTASESLDFERAKEYRDLIQHIQNL).

It belongs to the UvrC family. In terms of assembly, interacts with UvrB in an incision complex.

It is found in the cytoplasm. Its function is as follows. The UvrABC repair system catalyzes the recognition and processing of DNA lesions. UvrC both incises the 5' and 3' sides of the lesion. The N-terminal half is responsible for the 3' incision and the C-terminal half is responsible for the 5' incision. The chain is UvrABC system protein C from Staphylococcus aureus (strain USA300).